We begin with the raw amino-acid sequence, 296 residues long: Probable endonuclease 4 (296 aa).

Zn(2+)-binding residues include His69, His109, Glu160, Asp194, His197, His231, Asp244, His246, and Glu276.

The protein belongs to the AP endonuclease 2 family. Zn(2+) serves as cofactor.

The catalysed reaction is Endonucleolytic cleavage to 5'-phosphooligonucleotide end-products.. Functionally, endonuclease IV plays a role in DNA repair. It cleaves phosphodiester bonds at apurinic or apyrimidinic (AP) sites, generating a 3'-hydroxyl group and a 5'-terminal sugar phosphate. The polypeptide is Probable endonuclease 4 (Sulfurovum sp. (strain NBC37-1)).